Here is a 148-residue protein sequence, read N- to C-terminus: Large ribosomal subunit protein bL19 (148 aa).

Belongs to the bacterial ribosomal protein bL19 family.

In terms of biological role, this protein is located at the 30S-50S ribosomal subunit interface and may play a role in the structure and function of the aminoacyl-tRNA binding site. The chain is Large ribosomal subunit protein bL19 from Beijerinckia indica subsp. indica (strain ATCC 9039 / DSM 1715 / NCIMB 8712).